Consider the following 50-residue polypeptide: Bacteriocin-like protein SboX (50 aa).

The sequence is that of Bacteriocin-like protein SboX (sboX) from Bacillus subtilis (strain 168).